Consider the following 496-residue polypeptide: Glutamate--tRNA ligase 2 (496 aa).

The short motif at 13 to 23 (PSPTGRLHVGG) is the 'HIGH' region element. The 'KMSKS' region signature appears at 255-259 (KLSKR). Residue Lys-258 coordinates ATP.

Belongs to the class-I aminoacyl-tRNA synthetase family. Glutamate--tRNA ligase type 1 subfamily. As to quaternary structure, monomer.

The protein resides in the cytoplasm. It carries out the reaction tRNA(Glu) + L-glutamate + ATP = L-glutamyl-tRNA(Glu) + AMP + diphosphate. In terms of biological role, catalyzes the attachment of glutamate to tRNA(Glu) in a two-step reaction: glutamate is first activated by ATP to form Glu-AMP and then transferred to the acceptor end of tRNA(Glu). The sequence is that of Glutamate--tRNA ligase 2 from Rubrobacter xylanophilus (strain DSM 9941 / JCM 11954 / NBRC 16129 / PRD-1).